A 744-amino-acid chain; its full sequence is NADH-ubiquinone oxidoreductase 78 kDa subunit, mitochondrial (744 aa).

Residues 1–10 are compositionally biased toward polar residues; that stretch reads MLRSTLSRSA. Residues 1 to 26 form a disordered region; the sequence is MLRSTLSRSAWRTGRHQAARNASRAF. Residues 1–33 constitute a mitochondrion transit peptide; sequence MLRSTLSRSAWRTGRHQAARNASRAFSATAQRP. In terms of domain architecture, 2Fe-2S ferredoxin-type spans 34 to 112; the sequence is AEVELTIDGK…GMVVKTNSPL (79 aa). Positions 68, 79, 82, and 96 each coordinate [2Fe-2S] cluster. The 4Fe-4S His(Cys)3-ligated-type domain occupies 112 to 151; it reads LTHKAREGVMEFLLANHPLDCPICDQGGECDLQDQSMRYG. [4Fe-4S] cluster is bound by residues H128, C132, C135, C141, C182, C185, C188, and C232. A 4Fe-4S Mo/W bis-MGD-type domain is found at 251-307; the sequence is LKKTESIDVLDGLGSNIRVDTRGLEVMRILPRLNDEVNEEWINDKTRFACDGLKTQR.

It belongs to the complex I 75 kDa subunit family. As to quaternary structure, complex I is composed of about 40 different subunits. [2Fe-2S] cluster serves as cofactor. Requires [4Fe-4S] cluster as cofactor.

The protein localises to the mitochondrion inner membrane. The catalysed reaction is a ubiquinone + NADH + 5 H(+)(in) = a ubiquinol + NAD(+) + 4 H(+)(out). Functionally, core subunit of the mitochondrial membrane respiratory chain NADH dehydrogenase (Complex I) that is believed to belong to the minimal assembly required for catalysis. Complex I functions in the transfer of electrons from NADH to the respiratory chain. The immediate electron acceptor for the enzyme is believed to be ubiquinone. This is the largest subunit of complex I and it is a component of the iron-sulfur (IP) fragment of the enzyme. It may form part of the active site crevice where NADH is oxidized. The protein is NADH-ubiquinone oxidoreductase 78 kDa subunit, mitochondrial (nuo78) of Neurospora crassa (strain ATCC 24698 / 74-OR23-1A / CBS 708.71 / DSM 1257 / FGSC 987).